The following is a 511-amino-acid chain: MFTLGTALSNQIDANWQTYVMIIVYFIILLIIGFYGYRQATGNLSEFMLGGRSIGPYITALSAGASDMSGWMIMGLPGSVYSTGLSAIWITIGLTLGAYINYFVVAPRLRVYTEIAGDAITLPDFFKNRLDDKKNIIKIISGLIIVVFFTLYTHSGFVSGGKLFESAFGLNYHAGLLIVAIIVIFYTFFGGYLAVSITDFFQGVIMLIAMVMVPIVALLKLNGWDTFHDIAQMKPTNLDLFRGTTVLGIVSLFSWGLGYFGQPHIIVRFMSIKSHKLLPKARRLGISWMAVGLLGAIGVGLTGISFISERHIKLEDPETLFIVMSQILFHPLVGGFLLAAILAAIMSTISSQLLVTSSSLTEDFYKLIRGSDKASSHQKEFVLIGRLSVLLVAIVAITIAWHPNDTILNLVGNAWAGFGAAFSPLVLYSLYWKDLTRAGAISGMVAGAVVVIVWISWIKPLATINAFFGMYEIIPGFIVSVLITYIVSKLTKKPDDYVIENLNKVKHVVKE.

Transmembrane regions (helical) follow at residues 16–36 (WQTYVMIIVYFIILLIIGFYG), 54–74 (IGPYITALSAGASDMSGWMIM), 85–105 (LSAIWITIGLTLGAYINYFVV), 139–159 (IISGLIIVVFFTLYTHSGFVS), 175–195 (GLLIVAIIVIFYTFFGGYLAV), 199–219 (DFFQGVIMLIAMVMVPIVALL), 246–266 (VLGIVSLFSWGLGYFGQPHII), 284–304 (LGISWMAVGLLGAIGVGLTGI), 327–347 (ILFHPLVGGFLLAAILAAIMS), 381–401 (FVLIGRLSVLLVAIVAITIAW), 407–427 (ILNLVGNAWAGFGAAFSPLVL), 438–458 (AGAISGMVAGAVVVIVWISWI), and 467–487 (FFGMYEIIPGFIVSVLITYIV).

The protein belongs to the sodium:solute symporter (SSF) (TC 2.A.21) family.

The protein localises to the cell membrane. The catalysed reaction is L-proline(in) + Na(+)(in) = L-proline(out) + Na(+)(out). Catalyzes the sodium-dependent uptake of extracellular L-proline. This is Sodium/proline symporter (putP) from Staphylococcus epidermidis (strain ATCC 35984 / DSM 28319 / BCRC 17069 / CCUG 31568 / BM 3577 / RP62A).